Here is a 621-residue protein sequence, read N- to C-terminus: Chaperone protein HtpG (621 aa).

The tract at residues 1–325 (MTDASVKETF…SQDLSLNVSR (325 aa)) is a; substrate-binding. The b stretch occupies residues 326–541 (EMLQSDPKLA…EGDIDVNLER (216 aa)). Residues 542-621 (MLKRHGQLQD…RLGSVMDSAL (80 aa)) are c.

The protein belongs to the heat shock protein 90 family. Homodimer.

Its subcellular location is the cytoplasm. Molecular chaperone. Has ATPase activity. In Roseobacter denitrificans (strain ATCC 33942 / OCh 114) (Erythrobacter sp. (strain OCh 114)), this protein is Chaperone protein HtpG.